Here is a 319-residue protein sequence, read N- to C-terminus: Phosphatidylglycerol--prolipoprotein diacylglyceryl transferase (319 aa).

3 helical membrane-spanning segments follow: residues 21–41, 50–70, and 98–118; these read PIPI…AIWL, GGNP…GIIG, and NGGL…AVFF. Arg-144 provides a ligand contact to a 1,2-diacyl-sn-glycero-3-phospho-(1'-sn-glycerol). The next 2 helical transmembrane spans lie at 191–211 and 254–274; these read VHPT…LLMW and INTI…FLLK. The tract at residues 295–319 is disordered; it reads AVASPDGKPLPKAGEGIDGETPSTR.

This sequence belongs to the Lgt family.

It is found in the cell membrane. It carries out the reaction L-cysteinyl-[prolipoprotein] + a 1,2-diacyl-sn-glycero-3-phospho-(1'-sn-glycerol) = an S-1,2-diacyl-sn-glyceryl-L-cysteinyl-[prolipoprotein] + sn-glycerol 1-phosphate + H(+). It functions in the pathway protein modification; lipoprotein biosynthesis (diacylglyceryl transfer). Catalyzes the transfer of the diacylglyceryl group from phosphatidylglycerol to the sulfhydryl group of the N-terminal cysteine of a prolipoprotein, the first step in the formation of mature lipoproteins. This chain is Phosphatidylglycerol--prolipoprotein diacylglyceryl transferase, found in Corynebacterium glutamicum (strain R).